The sequence spans 667 residues: MIDRQNDNLFDLVAPYEPAGDQPAAIETLTKNFEAGAKAQVLMGATGTGKTFTMSNVIKNLNKPTLIISHNKTLAGQLYAEFKQFFPNNAVEYFVSYYDYYQPEAYVPSSDTYIEKDSSINDEIDKLRHSATSSLLERNDVIVVASVSCIFGLGDPREYQNHVLSLRPGMEVERNDLLRQLVDIQFERNDIDFQRGRFRVRGDVVEIFPASRDDHALRVEFFGDEIDRIVEVDALTGEVIGERSHVAIFPATHFMTNDEKMEKAIESIKAELAERLAVLKGEGKLLEAQRLEQRTNYDLEMMQEMGYCSGIENYSRHMEDRQAGEPPYTLLDFFPKDSIMMIDESHVTMPQIRGMYNGDRARKQMLIDYGFRLPSALDNRPLTLPEFEEHVNEIMYVSATPGPYEAEQTDIQVDQIIRPTGLLDPNIEVRPIMGQIDDLVGEINDRIEKNERVFITTLTKKMSEDLTDYLKELGIKVRYLHSDIKTLERTEIIRDLRLGKFDVLIGINLLREGIDVPEVSLVAILDADKEGFLRSERSLIQTIGRASRNEHGQVLLYADKITDSMRHAIDETKRRRTIQEDYNTAHNITPKTIIKPIRDAISMVQSVEHPEEIKMTNEIDLENMSKAEKLEMVERLSEQMRLAAKKLDFEQAATLRDTILELKSEID.

The 384-residue stretch at 31-414 (KNFEAGAKAQ…EAEQTDIQVD (384 aa)) folds into the Helicase ATP-binding domain. 44-51 (GATGTGKT) is a binding site for ATP. Positions 97–120 (YYDYYQPEAYVPSSDTYIEKDSSI) match the Beta-hairpin motif. One can recognise a Helicase C-terminal domain in the interval 435–597 (QIDDLVGEIN…ITPKTIIKPI (163 aa)). The 36-residue stretch at 630–665 (LEMVERLSEQMRLAAKKLDFEQAATLRDTILELKSE) folds into the UVR domain.

It belongs to the UvrB family. In terms of assembly, forms a heterotetramer with UvrA during the search for lesions. Interacts with UvrC in an incision complex.

It localises to the cytoplasm. In terms of biological role, the UvrABC repair system catalyzes the recognition and processing of DNA lesions. A damage recognition complex composed of 2 UvrA and 2 UvrB subunits scans DNA for abnormalities. Upon binding of the UvrA(2)B(2) complex to a putative damaged site, the DNA wraps around one UvrB monomer. DNA wrap is dependent on ATP binding by UvrB and probably causes local melting of the DNA helix, facilitating insertion of UvrB beta-hairpin between the DNA strands. Then UvrB probes one DNA strand for the presence of a lesion. If a lesion is found the UvrA subunits dissociate and the UvrB-DNA preincision complex is formed. This complex is subsequently bound by UvrC and the second UvrB is released. If no lesion is found, the DNA wraps around the other UvrB subunit that will check the other stand for damage. The polypeptide is UvrABC system protein B (Latilactobacillus sakei subsp. sakei (strain 23K) (Lactobacillus sakei subsp. sakei)).